Reading from the N-terminus, the 275-residue chain is Vitamin B12-binding protein (275 aa).

Positions 1–19 are cleaved as a signal peptide; it reads MMNKICLYLPLFFSSLTMA. One can recognise a Fe/B12 periplasmic-binding domain in the interval 25–272; the sequence is RVISLAPHAT…EVCEHFESVK (248 aa). Residues Cys-185 and Cys-265 are joined by a disulfide bond.

The protein belongs to the BtuF family. The complex is composed of two ATP-binding proteins (BtuD), two transmembrane proteins (BtuC) and a solute-binding protein (BtuF).

The protein localises to the periplasm. Part of the ABC transporter complex BtuCDF involved in vitamin B12 import. Binds vitamin B12 and delivers it to the periplasmic surface of BtuC. This is Vitamin B12-binding protein from Vibrio parahaemolyticus serotype O3:K6 (strain RIMD 2210633).